The primary structure comprises 194 residues: Large ribosomal subunit protein uL6z/uL6y (194 aa).

The residue at position 75 (threonine 75) is a Phosphothreonine.

This sequence belongs to the universal ribosomal protein uL6 family.

The chain is Large ribosomal subunit protein uL6z/uL6y (RPL9B) from Arabidopsis thaliana (Mouse-ear cress).